Here is a 228-residue protein sequence, read N- to C-terminus: Claudin-10 (228 aa).

The chain crosses the membrane as a helical span at residues 1 to 21 (MASTASEIIAFMVSISGWVLV). Residues 22-80 (SSTLPTDYWKVSTIDGTVITTATYWANLWKACVTDSTGVSNCKDFPSMLALDGYIQACR) are Extracellular-facing. A helical transmembrane segment spans residues 81–101 (GLMIAAVSLGFFGSIFALFGM). The Cytoplasmic portion of the chain corresponds to 102–115 (KCTKVGGSDKAKAK). The helical transmembrane segment at 116–136 (IACLAGIVFILSGLCSMTGCS) threads the bilayer. The Extracellular portion of the chain corresponds to 137 to 160 (LYANKITTEFFDPLFVEQKYELGA). A helical transmembrane segment spans residues 161–181 (ALFIGWAGASLCIIGGVIFCF). Residues 182–228 (SISDNNKTPRYTYNGATSVMSSRTKYHGGEDFKTTNPSKQFDKNAYV) are Cytoplasmic-facing.

The protein belongs to the claudin family. Can form homodimers both in trans (interaction between CLDN10 molecules in opposing membranes) and in cis (interaction between CLDN10 molecules within one membrane). As to quaternary structure, interacts with CLDN19. As to expression, expressed in the kidney, eccrine sweat glands and in all layers of the epidermis. In the kidney, it is detected in the thick ascending limb of Henle's loop (TAL). In the sweat glands, it is expressed in cells from secretory portions, corresponding to the clear cells.

The protein localises to the cell junction. Its subcellular location is the tight junction. It is found in the cell membrane. The catalysed reaction is Na(+)(in) = Na(+)(out). The enzyme catalyses Li(+)(in) = Li(+)(out). It carries out the reaction K(+)(in) = K(+)(out). It catalyses the reaction Rb(+)(in) = Rb(+)(out). The catalysed reaction is Cs(+)(in) = Cs(+)(out). The enzyme catalyses NH4(+)(in) = NH4(+)(out). It carries out the reaction methylamine(out) = methylamine(in). It catalyses the reaction Mg(2+)(in) = Mg(2+)(out). The catalysed reaction is Ca(2+)(in) = Ca(2+)(out). The enzyme catalyses Sr(2+)(in) = Sr(2+)(out). It carries out the reaction chloride(in) = chloride(out). It catalyses the reaction nitrate(in) = nitrate(out). Forms paracellular channels: polymerizes in tight junction strands with cation- and anion-selective channels through the strands, conveying epithelial permeability in a process known as paracellular tight junction permeability. Functionally, forms cation-selective paracellular channels. In sweat glands and in the thick ascending limb (TAL) of Henle's loop in kidney, it controls paracellular sodium permeability which is essential for proper sweat production and renal function. In terms of biological role, forms anion-selective paracellular channels. In renal proximal tubules, it conveys selective chloride over hydrogencarbonate anion permeability which is required for renal chloride reabsorption and salt homeostasis. The protein is Claudin-10 of Homo sapiens (Human).